The primary structure comprises 248 residues: 2,3-bisphosphoglycerate-dependent phosphoglycerate mutase (248 aa).

Residues 8 to 15 (RHGESTWN), 21 to 22 (TG), R60, 87 to 90 (ERHY), K98, 114 to 115 (RR), and 183 to 184 (GN) contribute to the substrate site. H9 (tele-phosphohistidine intermediate) is an active-site residue. E87 functions as the Proton donor/acceptor in the catalytic mechanism.

This sequence belongs to the phosphoglycerate mutase family. BPG-dependent PGAM subfamily. Homodimer.

It carries out the reaction (2R)-2-phosphoglycerate = (2R)-3-phosphoglycerate. Its pathway is carbohydrate degradation; glycolysis; pyruvate from D-glyceraldehyde 3-phosphate: step 3/5. Its function is as follows. Catalyzes the interconversion of 2-phosphoglycerate and 3-phosphoglycerate. In Burkholderia cenocepacia (strain ATCC BAA-245 / DSM 16553 / LMG 16656 / NCTC 13227 / J2315 / CF5610) (Burkholderia cepacia (strain J2315)), this protein is 2,3-bisphosphoglycerate-dependent phosphoglycerate mutase.